Reading from the N-terminus, the 191-residue chain is Probable ribosome biogenesis protein RLP24 (191 aa).

Ser-136 carries the post-translational modification Phosphoserine.

Belongs to the eukaryotic ribosomal protein eL24 family. As to quaternary structure, associated with nucleolar and cytoplasmic pre-60S particles. At the end of biogenesis it dissociates from cytoplasmic pre-60S particles and is likely to be exchanged for its ribosomal homologue, RPL24.

The protein resides in the nucleus. Its subcellular location is the nucleolus. Its function is as follows. Involved in the biogenesis of the 60S ribosomal subunit. Ensures the docking of NOG1 to pre-60S particles. The chain is Probable ribosome biogenesis protein RLP24 (RpL24-like) from Drosophila melanogaster (Fruit fly).